The following is a 456-amino-acid chain: Antizyme inhibitor 2 (456 aa).

Catalysis depends on Cys357, which acts as the Proton donor; shared with dimeric partner.

The protein belongs to the Orn/Lys/Arg decarboxylase class-II family. ODC antizyme inhibitor subfamily. As to quaternary structure, monomer. Interacts with OAZ1; this interaction disrupts the interaction between the antizyme and ODC1. Does not form a heterodimer with ODC1.

It is found in the nucleus. The protein resides in the cytoplasm. Its subcellular location is the perinuclear region. The protein localises to the membrane. It localises to the cytoplasmic vesicle. It is found in the endoplasmic reticulum-Golgi intermediate compartment. The protein resides in the golgi apparatus. Its subcellular location is the cis-Golgi network. The protein localises to the trans-Golgi network. It localises to the cytoplasmic granule. It is found in the cell projection. The protein resides in the axon. Its subcellular location is the dendrite. The protein localises to the perikaryon. Its function is as follows. Antizyme inhibitor (AZI) protein that positively regulates ornithine decarboxylase (ODC) activity and polyamine uptake. AZI is an enzymatically inactive ODC homolog that counteracts the negative effect of ODC antizyme (AZ) on ODC activity by competing with ODC for antizyme-binding. Inhibits antizyme-dependent ODC degradation and releases ODC monomers from their inactive complex with antizymes, leading to formation of the catalytically active ODC homodimer and restoring polyamine production. Participates in the morphological integrity of the trans-Golgi network (TGN) and functions as a regulator of intracellular secretory vesicle trafficking. This chain is Antizyme inhibitor 2 (azin2), found in Xenopus laevis (African clawed frog).